The sequence spans 169 residues: NADH-quinone oxidoreductase subunit B (169 aa).

Residues Cys45, Cys46, Cys111, and Cys141 each contribute to the [4Fe-4S] cluster site.

The protein belongs to the complex I 20 kDa subunit family. As to quaternary structure, NDH-1 is composed of 14 different subunits. Subunits NuoB, C, D, E, F, and G constitute the peripheral sector of the complex. Requires [4Fe-4S] cluster as cofactor.

It is found in the cell membrane. It carries out the reaction a quinone + NADH + 5 H(+)(in) = a quinol + NAD(+) + 4 H(+)(out). Its function is as follows. NDH-1 shuttles electrons from NADH, via FMN and iron-sulfur (Fe-S) centers, to quinones in the respiratory chain. The immediate electron acceptor for the enzyme in this species is believed to be a menaquinone. Couples the redox reaction to proton translocation (for every two electrons transferred, four hydrogen ions are translocated across the cytoplasmic membrane), and thus conserves the redox energy in a proton gradient. The chain is NADH-quinone oxidoreductase subunit B from Clostridium beijerinckii (strain ATCC 51743 / NCIMB 8052) (Clostridium acetobutylicum).